Here is a 358-residue protein sequence, read N- to C-terminus: Isopentenyl-diphosphate delta-isomerase (358 aa).

Substrate is bound at residue 12-13 (RK). FMN-binding positions include 69–71 (AMT), Ser99, and Asn128. Gln158 lines the substrate pocket. Residue Glu159 coordinates Mg(2+). FMN is bound by residues Lys190, Thr220, 267–269 (GIR), and 288–289 (AG).

Belongs to the IPP isomerase type 2 family. Homooctamer. Dimer of tetramers. It depends on FMN as a cofactor. NADPH is required as a cofactor. The cofactor is Mg(2+).

The protein resides in the cytoplasm. The catalysed reaction is isopentenyl diphosphate = dimethylallyl diphosphate. Functionally, involved in the biosynthesis of isoprenoids. Catalyzes the 1,3-allylic rearrangement of the homoallylic substrate isopentenyl (IPP) to its allylic isomer, dimethylallyl diphosphate (DMAPP). This chain is Isopentenyl-diphosphate delta-isomerase, found in Listeria innocua serovar 6a (strain ATCC BAA-680 / CLIP 11262).